Here is a 428-residue protein sequence, read N- to C-terminus: Dihydroorotase (428 aa).

Residues His-61 and His-63 each coordinate Zn(2+). Residues 63–65 (HLR) and Asn-95 contribute to the substrate site. Zn(2+) contacts are provided by Asp-153, His-180, and His-233. A substrate-binding site is contributed by Asn-279. Residue Asp-306 participates in Zn(2+) binding. Asp-306 is an active-site residue. Substrate is bound by residues His-310 and 324-325 (FG).

The protein belongs to the metallo-dependent hydrolases superfamily. DHOase family. Class I DHOase subfamily. The cofactor is Zn(2+).

It carries out the reaction (S)-dihydroorotate + H2O = N-carbamoyl-L-aspartate + H(+). It participates in pyrimidine metabolism; UMP biosynthesis via de novo pathway; (S)-dihydroorotate from bicarbonate: step 3/3. Catalyzes the reversible cyclization of carbamoyl aspartate to dihydroorotate. This is Dihydroorotase from Geobacillus thermodenitrificans (strain NG80-2).